The chain runs to 87 residues: Toxin CsEv3 (87 aa).

A signal peptide spans 1-19; it reads MNSLLMITACLFLIGTVWA. In terms of domain architecture, LCN-type CS-alpha/beta spans 20–85; that stretch reads KEGYLVNKST…TYPLPNKSCG (66 aa). Disulfide bonds link C31–C84, C35–C60, C44–C65, and C48–C67. Cysteine amide is present on C84.

This sequence belongs to the long (4 C-C) scorpion toxin superfamily. Sodium channel inhibitor family. Beta subfamily. In terms of tissue distribution, expressed by the venom gland.

The protein localises to the secreted. Beta toxins bind voltage-independently at site-4 of sodium channels (Nav) and shift the voltage of activation toward more negative potentials thereby affecting sodium channel activation and promoting spontaneous and repetitive firing. Induces immediate paralysis in crickets after injection, with a total paralysis occurring within 15-30 minutes and lasting for 1-2 hours. Is also lethal to vertebrate (chicks) when injected in very high dosages (more that 100 mg/kg). In Centruroides sculpturatus (Arizona bark scorpion), this protein is Toxin CsEv3.